We begin with the raw amino-acid sequence, 443 residues long: UDP-N-acetylmuramate--L-alanine ligase (443 aa).

110–116 (GAHGKTS) contacts ATP.

The protein belongs to the MurCDEF family.

The protein localises to the cytoplasm. It catalyses the reaction UDP-N-acetyl-alpha-D-muramate + L-alanine + ATP = UDP-N-acetyl-alpha-D-muramoyl-L-alanine + ADP + phosphate + H(+). The protein operates within cell wall biogenesis; peptidoglycan biosynthesis. Functionally, cell wall formation. In Streptococcus gordonii (strain Challis / ATCC 35105 / BCRC 15272 / CH1 / DL1 / V288), this protein is UDP-N-acetylmuramate--L-alanine ligase.